We begin with the raw amino-acid sequence, 236 residues long: Eukaryotic translation initiation factor 3 subunit K (236 aa).

A PCI domain is found at 42–222 (YDKDILVTTL…TIKSRNIEEK (181 aa)).

The protein belongs to the eIF-3 subunit K family. Component of the eukaryotic translation initiation factor 3 (eIF-3) complex.

It is found in the cytoplasm. Its function is as follows. Component of the eukaryotic translation initiation factor 3 (eIF-3) complex, which is involved in protein synthesis of a specialized repertoire of mRNAs and, together with other initiation factors, stimulates binding of mRNA and methionyl-tRNAi to the 40S ribosome. The eIF-3 complex specifically targets and initiates translation of a subset of mRNAs involved in cell proliferation. This chain is Eukaryotic translation initiation factor 3 subunit K, found in Brugia malayi (Filarial nematode worm).